We begin with the raw amino-acid sequence, 817 residues long: Nuclear hormone receptor family member nhr-48 (817 aa).

The segment at 49–91 (YNDDKDDPFYEDEGSGGGTSGGGKKSSRKRANTTSSSGGNEKE) is disordered. Residues 52–62 (DKDDPFYEDEG) are compositionally biased toward acidic residues. Gly residues predominate over residues 63-72 (SGGGTSGGGK). Positions 97-172 (NKVCRVCGDK…VGMKKEWIMS (76 aa)) form a DNA-binding region, nuclear receptor. 2 consecutive NR C4-type zinc fingers follow at residues 100–120 (CRVCGDKAFSYNFNVITCESC) and 136–155 (CPFNEQCEINMVSRRFCQRC). Residues 202 to 212 (ACMEDESENSY) show a composition bias toward acidic residues. Disordered stretches follow at residues 202–221 (ACMEDESENSYDEAPAPSHQ) and 258–284 (MNFYQDGPSDQGDYSLPSNSCASSSQL). Positions 273 to 284 (LPSNSCASSSQL) are enriched in polar residues.

Belongs to the nuclear hormone receptor family.

Its subcellular location is the nucleus. Orphan nuclear receptor. The polypeptide is Nuclear hormone receptor family member nhr-48 (nhr-48) (Caenorhabditis elegans).